Reading from the N-terminus, the 558-residue chain is SPATS2-like protein (558 aa).

A2 carries the post-translational modification N-acetylalanine. Basic residues predominate over residues 63 to 79; it reads GKKKNNKRKRSKSKQHQ. 2 disordered regions span residues 63–134 and 157–201; these read GKKK…EKKI and KLSL…KSNT. The segment covering 80 to 92 has biased composition (basic and acidic residues); the sequence is GNKDAKDKVERPE. Residue S120 is modified to Phosphoserine. Positions 271–344 form a coiled coil; it reads LMAEMDKVKE…ARFSCDIEQL (74 aa). Positions 380–525 are disordered; the sequence is TSGKQSNFSR…DTSEARPFRG (146 aa). 3 stretches are compositionally biased toward polar residues: residues 381–390, 410–432, and 440–456; these read SGKQSNFSRK, SLPSTADPSHQTMPANKQNGSSN, and QYHNNRLNGPAKSQGSG. A Phosphoserine modification is found at S455. Over residues 469-485 the composition is skewed to basic residues; it reads HEHRRQPHNGFRPKNKG. Positions 513-522 are enriched in basic and acidic residues; it reads HAADTSEARP.

The protein belongs to the SPATS2 family.

The protein localises to the cytoplasm. It localises to the nucleus. It is found in the nucleolus. In Homo sapiens (Human), this protein is SPATS2-like protein (SPATS2L).